A 2157-amino-acid polypeptide reads, in one-letter code: Polyketide synthase 2 (2157 aa).

The interval 7 to 244 (FIFGDQTGGF…IPIPIWAPYH (238 aa)) is N-terminal acylcarrier protein transacylase domain (SAT). Positions 374 to 807 (DSKIAIIGMS…GGNSALLLED (434 aa)) constitute a Ketosynthase family 3 (KS3) domain. Catalysis depends on for beta-ketoacyl synthase activity residues C546, H681, and H723. The malonyl-CoA:ACP transacylase (MAT) domain stretch occupies residues 908-1213 (GFVFSGQGAQ…ASLHRKDDGW (306 aa)). The For acyl/malonyl transferase activity role is filled by S998. A product template (PT) domain region spans residues 1290–1605 (TSSVQKIIRQ…RSLLNKVLPP (316 aa)). The segment at 1294–1428 (QKIIRQTDGP…CLLRFADPTS (135 aa)) is N-terminal hotdog fold. The region spanning 1294 to 1600 (QKIIRQTDGP…FLGMSRSLLN (307 aa)) is the PKS/mFAS DH domain. The active-site Proton acceptor; for dehydratase activity is the H1327. The tract at residues 1455–1600 (TDSLLSRGIV…FLGMSRSLLN (146 aa)) is C-terminal hotdog fold. The Proton donor; for dehydratase activity role is filled by D1514. Positions 1626–1652 (AASAKDTERRPLDIPTRAQRQPSSAQT) are disordered. A compositionally biased stretch (polar residues) spans 1643-1652 (AQRQPSSAQT). The Carrier 1 domain maps to 1649–1726 (SAQTGTMGRI…ELKAFLGADQ (78 aa)). S1686 is modified (O-(pantetheine 4'-phosphoryl)serine). A disordered region spans residues 1733–1762 (ACESSNGQHTPQTSDKGSGTLAVQKTDDDT). A compositionally biased stretch (polar residues) spans 1735–1755 (ESSNGQHTPQTSDKGSGTLAV). Positions 1765 to 1839 (DMTLNRVCAI…SLQKALCGSE (75 aa)) constitute a Carrier 2 domain. S1799 carries the post-translational modification O-(pantetheine 4'-phosphoryl)serine. The tract at residues 1840-1859 (AASNGAPEANETTPSSHRLE) is disordered. Residues 1875–2151 (ASPPHATSIL…MIEMGNLIGE (277 aa)) are thioesterase (TE) domain. S1981 acts as the For thioesterase activity in catalysis.

Functionally, polyketide synthase; part of the Pks2 gene cluster that mediates the formation of infectious structures (appressoria), enabling these fungi to kill insects faster. The product of the Pks2 gene cluster is different from the one of Pks1 and has still not been identified. The polypeptide is Polyketide synthase 2 (Metarhizium robertsii (strain ARSEF 23 / ATCC MYA-3075) (Metarhizium anisopliae (strain ARSEF 23))).